A 398-amino-acid chain; its full sequence is Elongation factor Tu (398 aa).

The tr-type G domain maps to 10-207 (KPHVNIGTIG…TVDDYIPDPE (198 aa)). Residues 19-26 (GHVDHGKT) are G1. 19–26 (GHVDHGKT) serves as a coordination point for GTP. A Mg(2+)-binding site is contributed by T26. The G2 stretch occupies residues 63-67 (GITIN). Positions 84–87 (DAPG) are G3. Residues 84–88 (DAPGH) and 139–142 (NKVD) contribute to the GTP site. Residues 139 to 142 (NKVD) form a G4 region. The segment at 177-179 (SAL) is G5.

It belongs to the TRAFAC class translation factor GTPase superfamily. Classic translation factor GTPase family. EF-Tu/EF-1A subfamily. Monomer.

Its subcellular location is the cytoplasm. The enzyme catalyses GTP + H2O = GDP + phosphate + H(+). Functionally, GTP hydrolase that promotes the GTP-dependent binding of aminoacyl-tRNA to the A-site of ribosomes during protein biosynthesis. The sequence is that of Elongation factor Tu from Streptococcus mutans serotype c (strain ATCC 700610 / UA159).